The following is a 400-amino-acid chain: Envelope glycoprotein M (400 aa).

The Intravirion segment spans residues 1-16 (MRASKSDRFLMSSWVK). The helical transmembrane segment at 17-37 (LLFVAVIMYICSAVVPMAATY) threads the bilayer. Topologically, residues 38-76 (EGLGFPCYFNNLVNYSALNLTVRNSAKHLTPTLFLEKPE) are virion surface. Residues 77-97 (MLVYIFWTFIVDGIAIVYYCL) traverse the membrane as a helical segment. Residues 98–113 (AAVAVYRAKHVHATTM) are Intravirion-facing. Residues 114–134 (MSMQSWIALLGSHSVLYVAIL) form a helical membrane-spanning segment. Over 135 to 152 (RMWSMQLFIHVLSYKHVL) the chain is Virion surface. A helical transmembrane segment spans residues 153 to 173 (MAAFVYCIHFCISFAHIQSLI). Topologically, residues 174 to 208 (TCNSAQWEIPLLEQHVPDNTMMESLLTRWKPVCVN) are intravirion. The chain crosses the membrane as a helical span at residues 209-229 (LYLSTTALEMLLFSLSTMMAV). Over 230–234 (GNSFY) the chain is Virion surface. Residues 235–255 (VLVSDAIFGAVNMFLALTVVW) traverse the membrane as a helical segment. Over 256-270 (YINTEFFLVKFMRRQ) the chain is Intravirion. Residues 271–291 (VGFYVGVFVGYLILLLPVIRY) traverse the membrane as a helical segment. Over 292–300 (ENAFVQANL) the chain is Virion surface. Residues 301-321 (HYIVAINISCIPILCILAIVI) form a helical membrane-spanning segment. Residues 322-400 (RVIRSDWGLC…EIDETQMIFI (79 aa)) are Intravirion-facing. The segment at 348 to 394 (DRTPTVHQKPPPLPAKTRARAKVKDISTPAPRTQYQSDHESDSEIDE) is disordered.

This sequence belongs to the herpesviridae glycoprotein M family. As to quaternary structure, interacts (via N-terminus) with gN (via N-terminus). The gM-gN heterodimer forms the gCII complex. N-glycosylated.

It localises to the virion membrane. It is found in the host Golgi apparatus. The protein resides in the host trans-Golgi network. The protein localises to the host endosome membrane. Its subcellular location is the host nucleus inner membrane. Envelope glycoprotein important for virion assembly and egress. Plays a role in the correct incorporation of gH-gL into virion membrane. Directs the glycoprotein N (gN) to the host trans-Golgi network. In Homo sapiens (Human), this protein is Envelope glycoprotein M.